Reading from the N-terminus, the 474-residue chain is RNA-binding protein Nova-1 (474 aa).

Over residues 1–12 (MAAAPIQQNGTH) the composition is skewed to polar residues. Residues 1 to 43 (MAAAPIQQNGTHTGVPIDLDPPDSRKRPLEAPPEAGSTKRTNT) are disordered. The Bipartite nuclear localization signal motif lies at 26-42 (KRPLEAPPEAGSTKRTN). 3 KH domains span residues 48–115 (QYFL…HGFI), 146–212 (IKQV…VELI), and 396–463 (KDVV…QYLI). The tract at residues 394-474 (GSKDVVEIAV…QRITYEQGVR (81 aa)) is required for RNA binding.

In terms of assembly, interacts with PTBP2; the interaction is direct.

The protein localises to the nucleus. In terms of biological role, functions to regulate alternative splicing in neurons by binding pre-mRNA in a sequence-specific manner to activate exon inclusion or exclusion. It binds specifically to the sequences 5'-YCAY-3' and regulates splicing in only a subset of regulated exons. Binding to an exonic 5'-YCAY-3' cluster changes the protein complexes assembled on pre-mRNA, blocking U1 snRNP binding and exon inclusion, whereas binding to an intronic 5'-YCAY-3' cluster enhances spliceosome assembly and exon inclusion. Binding to 5'-YCAY-3' clusters results in a local and asymmetric action to regulate spliceosome assembly and alternative splicing in neurons. Binding to an exonic 5'-YCAY-3' cluster changed the protein complexes assembled on pre-mRNA, blocking U1 snRNP (small nuclear ribonucleoprotein) binding and exon inclusion, whereas binding to an intronic 5'-YCAY-3' cluster enhanced spliceosome assembly and exon inclusion. With NOVA1, they perform unique biological functions in different brain areas and cell types. Autoregulates its own expression by acting as a splicing repressor. Acts to activate the inclusion of exon E3A in the glycine receptor alpha-2 chain and of exon E9 in gamma-aminobutyric-acid receptor gamma-2 subunit via a distal downstream UCAU-rich intronic splicing enhancer. Acts to regulate a novel glycine receptor alpha-2 chain splice variant (alpha-2N) in developing spinal cord. In Rattus norvegicus (Rat), this protein is RNA-binding protein Nova-1.